The chain runs to 395 residues: Chorismate synthase (395 aa).

Residue Arg48 participates in NADP(+) binding. An FMN-binding site is contributed by 125-127 (RSS). Positions 264 to 292 (RNEDWTFDDGESFDHVESEEGDPVPVGND) are disordered. Residues Gly298, 313–317 (HAPTS), and Arg340 each bind FMN. Residues 373-395 (PDRVDGNPGQYDTDYHPSSPDND) are disordered.

The protein belongs to the chorismate synthase family. The cofactor is FMNH2.

It catalyses the reaction 5-O-(1-carboxyvinyl)-3-phosphoshikimate = chorismate + phosphate. It functions in the pathway metabolic intermediate biosynthesis; chorismate biosynthesis; chorismate from D-erythrose 4-phosphate and phosphoenolpyruvate: step 7/7. In terms of biological role, catalyzes the anti-1,4-elimination of the C-3 phosphate and the C-6 proR hydrogen from 5-enolpyruvylshikimate-3-phosphate (EPSP) to yield chorismate, which is the branch point compound that serves as the starting substrate for the three terminal pathways of aromatic amino acid biosynthesis. This reaction introduces a second double bond into the aromatic ring system. This is Chorismate synthase from Halorubrum lacusprofundi (strain ATCC 49239 / DSM 5036 / JCM 8891 / ACAM 34).